Reading from the N-terminus, the 290-residue chain is Cilia- and flagella-associated protein 298-A (290 aa).

It belongs to the CFAP298 family.

It localises to the cytoplasm. The protein localises to the cytoskeleton. It is found in the cilium basal body. Plays a role in motile cilium function, possibly by acting on outer dynein arm assembly. Seems to be important for initiation rather than maintenance of cilium motility. Required for correct positioning of the cilium at the apical cell surface, suggesting an additional role in the planar cell polarity (PCP) pathway. May suppress canonical Wnt signaling activity. The protein is Cilia- and flagella-associated protein 298-A (cfap298-a) of Xenopus laevis (African clawed frog).